Here is a 283-residue protein sequence, read N- to C-terminus: Probable endonuclease 4 (283 aa).

Zn(2+) contacts are provided by His69, His109, Glu144, Asp178, His181, His215, Asp228, His230, and Glu260.

This sequence belongs to the AP endonuclease 2 family. Zn(2+) serves as cofactor.

It carries out the reaction Endonucleolytic cleavage to 5'-phosphooligonucleotide end-products.. Endonuclease IV plays a role in DNA repair. It cleaves phosphodiester bonds at apurinic or apyrimidinic (AP) sites, generating a 3'-hydroxyl group and a 5'-terminal sugar phosphate. This is Probable endonuclease 4 from Thermosipho melanesiensis (strain DSM 12029 / CIP 104789 / BI429).